Consider the following 118-residue polypeptide: Large ribosomal subunit protein bL19 (118 aa).

Belongs to the bacterial ribosomal protein bL19 family.

This protein is located at the 30S-50S ribosomal subunit interface and may play a role in the structure and function of the aminoacyl-tRNA binding site. The chain is Large ribosomal subunit protein bL19 from Lactiplantibacillus plantarum (strain ATCC BAA-793 / NCIMB 8826 / WCFS1) (Lactobacillus plantarum).